The sequence spans 589 residues: Aspartate--tRNA ligase (589 aa).

Glu-171 provides a ligand contact to L-aspartate. An aspartate region spans residues 195 to 198 (QLFK). Arg-217 contacts L-aspartate. Residues 217-219 (RDE) and Gln-226 each bind ATP. His-448 serves as a coordination point for L-aspartate. Residue Glu-482 coordinates ATP. Arg-489 serves as a coordination point for L-aspartate. 534 to 537 (GLDR) is a binding site for ATP.

It belongs to the class-II aminoacyl-tRNA synthetase family. Type 1 subfamily. Homodimer.

The protein resides in the cytoplasm. The enzyme catalyses tRNA(Asp) + L-aspartate + ATP = L-aspartyl-tRNA(Asp) + AMP + diphosphate. Catalyzes the attachment of L-aspartate to tRNA(Asp) in a two-step reaction: L-aspartate is first activated by ATP to form Asp-AMP and then transferred to the acceptor end of tRNA(Asp). In Idiomarina loihiensis (strain ATCC BAA-735 / DSM 15497 / L2-TR), this protein is Aspartate--tRNA ligase.